We begin with the raw amino-acid sequence, 174 residues long: 3-hydroxyanthranilate 3,4-dioxygenase (174 aa).

O2 is bound at residue arginine 47. Fe cation is bound by residues histidine 51, glutamate 57, and histidine 95. Glutamate 57 serves as a coordination point for substrate. Substrate-binding residues include arginine 99 and glutamate 110. Residues cysteine 125, cysteine 128, cysteine 162, and cysteine 165 each coordinate Fe cation.

It belongs to the 3-HAO family. As to quaternary structure, homodimer. Requires Fe(2+) as cofactor.

It carries out the reaction 3-hydroxyanthranilate + O2 = (2Z,4Z)-2-amino-3-carboxymuconate 6-semialdehyde. Its pathway is cofactor biosynthesis; NAD(+) biosynthesis; quinolinate from L-kynurenine: step 3/3. In terms of biological role, catalyzes the oxidative ring opening of 3-hydroxyanthranilate to 2-amino-3-carboxymuconate semialdehyde, which spontaneously cyclizes to quinolinate. The polypeptide is 3-hydroxyanthranilate 3,4-dioxygenase (Burkholderia lata (strain ATCC 17760 / DSM 23089 / LMG 22485 / NCIMB 9086 / R18194 / 383)).